A 483-amino-acid chain; its full sequence is Protein EFFECTOR OF TRANSCRIPTION 2 (483 aa).

Residues Ser-64 to Ala-112 form the GIY-YIG domain. Cx9Cx9RCx2HK repeat units follow at residues Cys-278–Lys-303 and Cys-338–Lys-363. Basic and acidic residues predominate over residues Glu-380–Ser-396. Residues Glu-380 to Glu-399 form a disordered region. 2 Cx9Cx9RCx2HK repeats span residues Cys-406–Lys-431 and Cys-453–Lys-478.

In terms of tissue distribution, expressed in vascular tissues of stems, hypocotyls, leaves and flowers. Expressed in the vascular bundles of xylem in shoot parenchyma cells. Expressed in the remnant cytoplasm of differentiated fiber cells and in protoxylem element of parenchymal cells.

The protein localises to the cytoplasm. The protein resides in the nucleus. Transcriptional regulator involved in the regulation of cell differentiation in meristems. Probably regulates the expression of various KNAT genes involved in the maintenance of the cells in an undifferentiated, merismastic state. Plays a role in the regulation of gibberellin 20 oxidase and the gibberellin-regulated protein GASA4. Localizes in the nucleus during the cellular differentiation state and may act via a single strand cutting domain. Transcriptional regulator required for the induction of dormancy during late seed development. Interacts genetically with FUS3 and may be component of the same regulatory pathway during embryogenesis. Binds both linear and supercoiled DNA without sequence preference. This chain is Protein EFFECTOR OF TRANSCRIPTION 2, found in Arabidopsis thaliana (Mouse-ear cress).